Reading from the N-terminus, the 294-residue chain is ATP phosphoribosyltransferase (294 aa).

Belongs to the ATP phosphoribosyltransferase family. Long subfamily. Mg(2+) is required as a cofactor.

Its subcellular location is the cytoplasm. The catalysed reaction is 1-(5-phospho-beta-D-ribosyl)-ATP + diphosphate = 5-phospho-alpha-D-ribose 1-diphosphate + ATP. It participates in amino-acid biosynthesis; L-histidine biosynthesis; L-histidine from 5-phospho-alpha-D-ribose 1-diphosphate: step 1/9. With respect to regulation, feedback inhibited by histidine. Its function is as follows. Catalyzes the condensation of ATP and 5-phosphoribose 1-diphosphate to form N'-(5'-phosphoribosyl)-ATP (PR-ATP). Has a crucial role in the pathway because the rate of histidine biosynthesis seems to be controlled primarily by regulation of HisG enzymatic activity. This chain is ATP phosphoribosyltransferase, found in Maricaulis maris (strain MCS10) (Caulobacter maris).